A 562-amino-acid chain; its full sequence is Serine/threonine-protein kinase STN7, chloroplastic (562 aa).

A chloroplast-targeting transit peptide spans 1 to 45; that stretch reads MATISPGGAYIGTPSPFLGKKLKPFSLTSPILSFKPTVKLNSSCR. One can recognise a Protein kinase domain in the interval 134–452; that stretch reads FVVGKKLGEG…AKAALAHPYF (319 aa). Residues 140 to 148 and lysine 167 contribute to the ATP site; that span reads LGEGSFGVV. Residue aspartate 279 is the Proton acceptor of the active site. At serine 526 the chain carries Phosphoserine. Phosphothreonine occurs at positions 537 and 541.

The protein belongs to the protein kinase superfamily. Ser/Thr protein kinase family. Post-translationally, phosphorylated.

It localises to the plastid. It is found in the chloroplast thylakoid membrane. The enzyme catalyses L-seryl-[protein] + ATP = O-phospho-L-seryl-[protein] + ADP + H(+). It catalyses the reaction L-threonyl-[protein] + ATP = O-phospho-L-threonyl-[protein] + ADP + H(+). Serine/threonine protein kinase required for state transition by phosphorylating light-harvesting complex II outer antennae (LCHII). State transition plays a central role in response to environmental changes and allows to adjust to changing light conditions via the redistribution of light excitation energy between photosystem II (PSII) and photosystem I (PSI). Phosphorylates the minor light harvesting protein LHCB4.2/CP29 and is involved in the light-dependent phosphorylation of TSP9. Acts as a key component of the long-term response (LTR) signaling pathway. Mediates phosphorylation-dependent PTAC16 subcellular localization to regulate plastid gene expression. This chain is Serine/threonine-protein kinase STN7, chloroplastic (STN7), found in Arabidopsis thaliana (Mouse-ear cress).